Here is a 585-residue protein sequence, read N- to C-terminus: Arginine--tRNA ligase (585 aa).

The 'HIGH' region signature appears at 131–141 (ANPTGPMHVGH).

Belongs to the class-I aminoacyl-tRNA synthetase family. Monomer.

The protein resides in the cytoplasm. It carries out the reaction tRNA(Arg) + L-arginine + ATP = L-arginyl-tRNA(Arg) + AMP + diphosphate. In Brucella abortus (strain S19), this protein is Arginine--tRNA ligase.